A 110-amino-acid chain; its full sequence is Large ribosomal subunit protein uL22 (110 aa).

This sequence belongs to the universal ribosomal protein uL22 family. Part of the 50S ribosomal subunit.

Its function is as follows. This protein binds specifically to 23S rRNA; its binding is stimulated by other ribosomal proteins, e.g. L4, L17, and L20. It is important during the early stages of 50S assembly. It makes multiple contacts with different domains of the 23S rRNA in the assembled 50S subunit and ribosome. The globular domain of the protein is located near the polypeptide exit tunnel on the outside of the subunit, while an extended beta-hairpin is found that lines the wall of the exit tunnel in the center of the 70S ribosome. The chain is Large ribosomal subunit protein uL22 from Nitrosomonas europaea (strain ATCC 19718 / CIP 103999 / KCTC 2705 / NBRC 14298).